The chain runs to 486 residues: Probable peptidoglycan glycosyltransferase FtsW (486 aa).

The Cytoplasmic portion of the chain corresponds to 1-50 (MAGAARDRAFLDHFGGAGADRPCHVEGALMNDMSRQATRLDAIGGRYDPW). The chain crosses the membrane as a helical span at residues 51-71 (LLGAAVTLASLGVVMVASSSI). The Periplasmic portion of the chain corresponds to 72–77 (ELEASP). A helical transmembrane segment spans residues 78–98 (FYYLTRHLLFLGGGIALAFWA). Over 99-112 (MRTELKTIEQHNQM) the chain is Cytoplasmic. A helical membrane pass occupies residues 113–133 (LLLACFVLLVVVFVPGLGSTV). Residues 134–141 (NGAKRWIN) lie on the Periplasmic side of the membrane. Residues 142-162 (LGVSRFQVVESVKVFYIIWLA) form a helical membrane-spanning segment. Residues 163–174 (SYLVRFRDEVNA) lie on the Cytoplasmic side of the membrane. The chain crosses the membrane as a helical span at residues 175 to 195 (TWQAMLKPVFVVGLLVGLLLL). Topologically, residues 196–199 (QPDF) are periplasmic. Residues 200 to 220 (GSSMLLLSVTACMLVLGGAPI) traverse the membrane as a helical segment. Over 221 to 222 (GR) the chain is Cytoplasmic. A helical transmembrane segment spans residues 223-243 (IILPILLLLPALVALVIFEPY). Over 244 to 298 (RMRRVTSFMDPWVDQLGSGYQLSNALMAIGRGQWTGVGLGASVQKLNYLPESHTD) the chain is Periplasmic. The chain crosses the membrane as a helical span at residues 299–319 (FIFSVIAEELGFVGVCGVIGL). The Cytoplasmic portion of the chain corresponds to 320–342 (YALLVGRAFWLGMRCVEMKRHFS). The helical transmembrane segment at 343–363 (GYIAFGIGLWIAMQSFVSIGV) threads the bilayer. Over 364–374 (NLGILPTKGLT) the chain is Periplasmic. The helical transmembrane segment at 375–395 (LPLISSGGSSVLMTCLAMGVL) threads the bilayer. Topologically, residues 396-486 (LRVSYEADRA…RVEPTFGRIA (91 aa)) are cytoplasmic.

This sequence belongs to the SEDS family. FtsW subfamily.

The protein localises to the cell inner membrane. The enzyme catalyses [GlcNAc-(1-&gt;4)-Mur2Ac(oyl-L-Ala-gamma-D-Glu-L-Lys-D-Ala-D-Ala)](n)-di-trans,octa-cis-undecaprenyl diphosphate + beta-D-GlcNAc-(1-&gt;4)-Mur2Ac(oyl-L-Ala-gamma-D-Glu-L-Lys-D-Ala-D-Ala)-di-trans,octa-cis-undecaprenyl diphosphate = [GlcNAc-(1-&gt;4)-Mur2Ac(oyl-L-Ala-gamma-D-Glu-L-Lys-D-Ala-D-Ala)](n+1)-di-trans,octa-cis-undecaprenyl diphosphate + di-trans,octa-cis-undecaprenyl diphosphate + H(+). It participates in cell wall biogenesis; peptidoglycan biosynthesis. Its function is as follows. Peptidoglycan polymerase that is essential for cell division. The polypeptide is Probable peptidoglycan glycosyltransferase FtsW (Xanthomonas oryzae pv. oryzae (strain KACC10331 / KXO85)).